A 271-amino-acid polypeptide reads, in one-letter code: Phosphatidylinositol transfer protein alpha isoform (271 aa).

A 1,2-diacyl-sn-glycero-3-phospho-(1D-myo-inositol) contacts are provided by Thr-59, Lys-61, Glu-86, Asn-90, Thr-97, and Lys-195. Lys-216 carries the post-translational modification N6-acetyllysine. Residues 251 to 264 (TKRQLDEMRQKDPV) show a composition bias toward basic and acidic residues. Residues 251–271 (TKRQLDEMRQKDPVKGMTADD) form a disordered region.

It belongs to the PtdIns transfer protein family. PI transfer class I subfamily. Phosphorylated by PKC in a calcium and phosphatidylserine-dependent manner. In terms of tissue distribution, expressed in a wide range of tissues.

The protein localises to the cytoplasm. It localises to the nucleus. It catalyses the reaction a 1,2-diacyl-sn-glycero-3-phosphocholine(in) = a 1,2-diacyl-sn-glycero-3-phosphocholine(out). It carries out the reaction a 1,2-diacyl-sn-glycero-3-phospho-(1D-myo-inositol)(in) = a 1,2-diacyl-sn-glycero-3-phospho-(1D-myo-inositol)(out). With respect to regulation, phosphatidylinositol transfer activity is inhibited by N-ethylmaleimide. Functionally, catalyzes the transfer of phosphatidylinositol (PI) and phosphatidylcholine (PC) between membranes. Shows a preference for PI and PC containing shorter saturated or monosaturated acyl chains at the sn-1 and sn-2 positions. Preference order for PC is C16:1 &gt; C16:0 &gt; C18:1 &gt; C18:0 &gt; C20:4 and for PI is C16:1 &gt; C16:0 &gt; C18:1 &gt; C18:0 &gt; C20:4 &gt; C20:3. This is Phosphatidylinositol transfer protein alpha isoform (Pitpna) from Rattus norvegicus (Rat).